A 214-amino-acid polypeptide reads, in one-letter code: Urease accessory protein UreG (214 aa).

23–30 (GPVGSGKT) is a GTP binding site.

This sequence belongs to the SIMIBI class G3E GTPase family. UreG subfamily. Homodimer. UreD, UreF and UreG form a complex that acts as a GTP-hydrolysis-dependent molecular chaperone, activating the urease apoprotein by helping to assemble the nickel containing metallocenter of UreC. The UreE protein probably delivers the nickel.

It is found in the cytoplasm. In terms of biological role, facilitates the functional incorporation of the urease nickel metallocenter. This process requires GTP hydrolysis, probably effectuated by UreG. This Bordetella bronchiseptica (strain ATCC BAA-588 / NCTC 13252 / RB50) (Alcaligenes bronchisepticus) protein is Urease accessory protein UreG.